Reading from the N-terminus, the 145-residue chain is Cystatin-F (145 aa).

An N-terminal signal peptide occupies residues 1–19; sequence MRAAGTLLAFCCLVLSTTG. N-linked (GlcNAc...) asparagine glycosylation is present at asparagine 62. A Secondary area of contact motif is present at residues 81–85; sequence QIVKG. The cysteines at positions 99 and 110 are disulfide-linked. Asparagine 115 carries N-linked (GlcNAc...) asparagine glycosylation. A disulfide bond links cysteine 124 and cysteine 144.

This sequence belongs to the cystatin family. As to quaternary structure, homodimer; disulfide-linked. As to expression, primarily expressed in peripheral blood cells and spleen.

The protein resides in the secreted. Its subcellular location is the cytoplasm. In terms of biological role, inhibits papain and cathepsin L but with affinities lower than other cystatins. May play a role in immune regulation through inhibition of a unique target in the hematopoietic system. This chain is Cystatin-F (CST7), found in Homo sapiens (Human).